A 764-amino-acid chain; its full sequence is Nucleolar transcription factor 1 (764 aa).

Methionine 1 is subject to N-acetylmethionine. Residues 1-21 are disordered; it reads MNGEADCPTDLEMAAPKGQDR. 2 DNA-binding regions (HMG box) span residues 112 to 180 and 196 to 264; these read PKKP…ARFR and PEKP…RDYI. Phosphothreonine is present on threonine 201. Serine 273, serine 336, serine 364, serine 389, serine 412, serine 433, serine 435, serine 484, serine 495, serine 546, serine 584, and serine 638 each carry phosphoserine. Positions 298-362 form a DNA-binding region, HMG box 3; the sequence is TKPPPNSYSL…DYEVELLRFL (65 aa). Residues 381–411 form a disordered region; it reads NINKKQATSPASKKPAQEGGKGGSEKPKRPV. DNA-binding regions (HMG box) lie at residues 407-475, 482-549, and 568-634; these read PKRP…GGER, PESP…SEMR, and KKPP…DLWV. The interval 459–487 is disordered; the sequence is REAALKAQSERKPGGEREERGKLPESPKR. A disordered region spans residues 546–576; the sequence is SEMRAPPAATNSSKKMKFQGEPKKPPMNGYQ. Residues 648 to 764 form a disordered region; it reads YISNKRKSMT…SGDSSDSDSN (117 aa). A compositionally biased stretch (polar residues) spans 664–674; the sequence is PKSSRTTLQSK. The span at 677–745 shows a compositional bias: acidic residues; that stretch reads SEEDDEEDED…DDDEDEDNES (69 aa). Residues 746–758 show a composition bias toward low complexity; sequence EGSSSSSSSSGDS.

Homodimer. Part of Pol I pre-initiation complex (PIC), in which Pol I core assembles with RRN3 and promoter-bound UTBF and SL1/TIF-IB complex. Interacts with TOP2A in the context of Pol I complex. Interacts with TBP. Interacts with TAF1A. Interacts with RASL11A. Binds to IRS1 and PIK3CA. Interacts with DHX33. Interacts with PHF6. Interacts with CEBPA (isoform 1 and isoform 4). Interacts with DDX11. Interacts with NOP53. Interacts with ALKBH2. In terms of processing, phosphorylated and activated by PIK3CA.

It localises to the nucleus. The protein localises to the nucleolus. Functionally, recognizes the ribosomal RNA gene promoter and activates transcription mediated by RNA polymerase I (Pol I) through cooperative interactions with the transcription factor SL1/TIF-IB complex. It binds specifically to the upstream control element and can activate Pol I promoter escape. The sequence is that of Nucleolar transcription factor 1 (UBTF) from Homo sapiens (Human).